Consider the following 1086-residue polypeptide: Isoleucine--tRNA ligase (1086 aa).

The 'HIGH' region signature appears at 53–63 (PFANGLPHYGH). Residues 624–628 (KLSKR) carry the 'KMSKS' region motif. Lysine 627 provides a ligand contact to ATP.

It belongs to the class-I aminoacyl-tRNA synthetase family. IleS type 2 subfamily. Monomer. Zn(2+) is required as a cofactor.

Its subcellular location is the cytoplasm. The catalysed reaction is tRNA(Ile) + L-isoleucine + ATP = L-isoleucyl-tRNA(Ile) + AMP + diphosphate. Functionally, catalyzes the attachment of isoleucine to tRNA(Ile). As IleRS can inadvertently accommodate and process structurally similar amino acids such as valine, to avoid such errors it has two additional distinct tRNA(Ile)-dependent editing activities. One activity is designated as 'pretransfer' editing and involves the hydrolysis of activated Val-AMP. The other activity is designated 'posttransfer' editing and involves deacylation of mischarged Val-tRNA(Ile). The chain is Isoleucine--tRNA ligase from Rickettsia prowazekii (strain Madrid E).